The chain runs to 428 residues: Probable pectin lyase F (428 aa).

Residues methionine 1 to alanine 20 form the signal peptide. The cysteines at positions 83 and 107 are disulfide-linked. Arginine 257 is a catalytic residue. Residue asparagine 276 is glycosylated (N-linked (GlcNAc...) asparagine). Residues cysteine 324 and cysteine 332 are joined by a disulfide bond. 2 disordered regions span residues leucine 337 to aspartate 367 and glycine 383 to tyrosine 428. A compositionally biased stretch (low complexity) spans alanine 389–tyrosine 417. The span at alanine 418–tyrosine 428 shows a compositional bias: basic residues.

The protein belongs to the polysaccharide lyase 1 family.

It is found in the secreted. The catalysed reaction is Eliminative cleavage of (1-&gt;4)-alpha-D-galacturonan methyl ester to give oligosaccharides with 4-deoxy-6-O-methyl-alpha-D-galact-4-enuronosyl groups at their non-reducing ends.. In terms of biological role, pectinolytic enzymes consist of four classes of enzymes: pectin lyase, polygalacturonase, pectin methylesterase and rhamnogalacturonase. Among pectinolytic enzymes, pectin lyase is the most important in depolymerization of pectin, since it cleaves internal glycosidic bonds of highly methylated pectins. This Aspergillus flavus (strain ATCC 200026 / FGSC A1120 / IAM 13836 / NRRL 3357 / JCM 12722 / SRRC 167) protein is Probable pectin lyase F (pelF).